The chain runs to 185 residues: Probable nicotinate-nucleotide adenylyltransferase (185 aa).

This sequence belongs to the NadD family.

It carries out the reaction nicotinate beta-D-ribonucleotide + ATP + H(+) = deamido-NAD(+) + diphosphate. It participates in cofactor biosynthesis; NAD(+) biosynthesis; deamido-NAD(+) from nicotinate D-ribonucleotide: step 1/1. In terms of biological role, catalyzes the reversible adenylation of nicotinate mononucleotide (NaMN) to nicotinic acid adenine dinucleotide (NaAD). This is Probable nicotinate-nucleotide adenylyltransferase from Methylorubrum extorquens (strain PA1) (Methylobacterium extorquens).